Reading from the N-terminus, the 101-residue chain is Urease subunit beta (101 aa).

This sequence belongs to the urease beta subunit family. As to quaternary structure, heterotrimer of UreA (gamma), UreB (beta) and UreC (alpha) subunits. Three heterotrimers associate to form the active enzyme.

It localises to the cytoplasm. It catalyses the reaction urea + 2 H2O + H(+) = hydrogencarbonate + 2 NH4(+). It functions in the pathway nitrogen metabolism; urea degradation; CO(2) and NH(3) from urea (urease route): step 1/1. The chain is Urease subunit beta from Burkholderia orbicola (strain AU 1054).